A 105-amino-acid polypeptide reads, in one-letter code: Oxytocin-neurophysin 1 (105 aa).

Cysteine 1 and cysteine 6 are disulfide-bonded. The residue at position 9 (glycine 9) is a Glycine amide. 7 cysteine pairs are disulfide-bonded: cysteine 22–cysteine 66, cysteine 25–cysteine 39, cysteine 33–cysteine 56, cysteine 40–cysteine 46, cysteine 73–cysteine 85, cysteine 79–cysteine 97, and cysteine 86–cysteine 91.

The protein belongs to the vasopressin/oxytocin family. In terms of assembly, interacts with oxytocin receptor (Ki=1.5 nM). Interacts with vasopressin V1aR/AVPR1A (Ki=37 nM), V1bR/AVPR1B (Ki=222 nM), and V2R/AVPR2 receptors (Ki=823 nM).

It localises to the secreted. Neurophysin 1 specifically binds oxytocin. Its function is as follows. Oxytocin causes contraction of the smooth muscle of the uterus and of the mammary gland. Acts by binding to oxytocin receptor (OXTR). The sequence is that of Oxytocin-neurophysin 1 (OXT) from Equus caballus (Horse).